Reading from the N-terminus, the 201-residue chain is Probable nicotinate-nucleotide adenylyltransferase (201 aa).

A disordered region spans residues Gly-182 to Arg-201. Residues Ile-192–Arg-201 show a composition bias toward basic and acidic residues.

It belongs to the NadD family.

It catalyses the reaction nicotinate beta-D-ribonucleotide + ATP + H(+) = deamido-NAD(+) + diphosphate. The protein operates within cofactor biosynthesis; NAD(+) biosynthesis; deamido-NAD(+) from nicotinate D-ribonucleotide: step 1/1. Its function is as follows. Catalyzes the reversible adenylation of nicotinate mononucleotide (NaMN) to nicotinic acid adenine dinucleotide (NaAD). The polypeptide is Probable nicotinate-nucleotide adenylyltransferase (Parvibaculum lavamentivorans (strain DS-1 / DSM 13023 / NCIMB 13966)).